The following is a 576-amino-acid chain: Arginine--tRNA ligase (576 aa).

The 'HIGH' region motif lies at 126 to 136 (ANPTGPMHIGH).

The protein belongs to the class-I aminoacyl-tRNA synthetase family. As to quaternary structure, monomer.

It is found in the cytoplasm. It catalyses the reaction tRNA(Arg) + L-arginine + ATP = L-arginyl-tRNA(Arg) + AMP + diphosphate. The polypeptide is Arginine--tRNA ligase (Rickettsia peacockii (strain Rustic)).